Here is a 1234-residue protein sequence, read N- to C-terminus: MAGAQPGVHALQLEPPTVVETLRRGSKFIKWDEETSSRNLVTLRVDPNGFFLYWTGPNMEVDTLDISSIRDTRTGRYARLPKDPKIREVLGFGGPDARLEEKLMTVVSGPDPVNTVFLNFMAVQDDTAKVWSEELFKLAMNILAQNASRNTFLRKAYTKLKLQVNQDGRIPVKNILKMFSADKKRVETALESCGLKFNRSESIRPDEFSLEIFERFLNKLCLRPDIDKILLEIGAKGKPYLTLEQLMDFINQKQRDPRLNEVLYPPLRPSQARLLIEKYEPNQQFLERDQMSMEGFSRYLGGEENGILPLEALDLSTDMTQPLSAYFINSSHNTYLTAGQLAGTSSVEMYRQALLWGCRCVELDVWKGRPPEEEPFITHGFTMTTEVPLRDVLEAIAETAFKTSPYPVILSFENHVDSAKQQAKMAEYCRSIFGDALLIEPLDKYPLAPGVPLPSPQDLMGRILVKNKKRHRPSAGGPDSAGRKRPLEQSNSALSESSAATEPSSPQLGSPSSDSCPGLSNGEEVGLEKPSLEPQKSLGDEGLNRGPYVLGPADREDEEEDEEEEEQTDPKKPTTDEGTASSEVNATEEMSTLVNYIEPVKFKSFEAARKRNKCFEMSSFVETKAMEQLTKSPMEFVEYNKQQLSRIYPKGTRVDSSNYMPQLFWNVGCQLVALNFQTLDVAMQLNAGVFEYNGRSGYLLKPEFMRRPDKSFDPFTEVIVDGIVANALRVKVISGQFLSDRKVGIYVEVDMFGLPVDTRRKYRTRTSQGNSFNPVWDEEPFDFPKVVLPTLASLRIAAFEEGGKFVGHRILPVSAIRSGYHYVCLRNEANQPLCLPALLIYTEASDYIPDDHQDYAEALINPIKHVSLMDQRARQLAALIGESEAQAGQETCQDTQSQQLGSQPSSNPTPSPLDASPRRPPGPTTSPASTSLSSPGQRDDLIASILSEVAPTPLDELRGHKALVKLRSRQERDLRELRKKHQRKAVTLTRRLLDGLAQAQAEGRCRLRPGALGGAADVEDTKEGEDEAKRYQEFQNRQVQSLLELREAQVDAEAQRRLEHLRQALQRLREVVLDANTTQFKRLKEMNEREKKELQKILDRKRHNSISEAKMRDKHKKEAELTEINRRHITESVNSIRRLEEAQKQRHDRLVAGQQQVLQQLAEEEPKLLAQLAQECQEQRARLPQEIRRSLLGEMPEGLGDGPLVACASNGHAPGSSGHLSGADSESQEENTQL.

Residue alanine 2 is modified to N-acetylalanine. Positions 318-468 (DMTQPLSAYF…LMGRILVKNK (151 aa)) constitute a PI-PLC X-box domain. Residues histidine 332 and histidine 379 contribute to the active site. The interval 467–587 (NKKRHRPSAG…GTASSEVNAT (121 aa)) is disordered. 4 positions are modified to phosphoserine: serine 474, serine 490, serine 495, and serine 537. Positions 488–515 (EQSNSALSESSAATEPSSPQLGSPSSDS) are enriched in low complexity. Positions 555 to 567 (REDEEEDEEEEEQ) are enriched in acidic residues. The span at 576-587 (DEGTASSEVNAT) shows a compositional bias: polar residues. Residues 590–706 (MSTLVNYIEP…GYLLKPEFMR (117 aa)) form the PI-PLC Y-box domain. The C2 domain maps to 707-835 (RPDKSFDPFT…RNEANQPLCL (129 aa)). A compositionally biased stretch (polar residues) spans 887-908 (AGQETCQDTQSQQLGSQPSSNP). The tract at residues 887–937 (AGQETCQDTQSQQLGSQPSSNPTPSPLDASPRRPPGPTTSPASTSLSSPGQ) is disordered. Positions 925–936 (TSPASTSLSSPG) are enriched in low complexity. A phosphoserine mark is found at serine 926 and serine 1105. The interval 1198–1234 (GLGDGPLVACASNGHAPGSSGHLSGADSESQEENTQL) is disordered. An interaction with SHANK2 region spans residues 1231–1234 (NTQL).

In terms of assembly, interacts with SHANK2. Interacts with LPAR2. Ca(2+) serves as cofactor.

Its subcellular location is the cytoplasm. The protein localises to the membrane. The protein resides in the nucleus. It carries out the reaction a 1,2-diacyl-sn-glycero-3-phospho-(1D-myo-inositol-4,5-bisphosphate) + H2O = 1D-myo-inositol 1,4,5-trisphosphate + a 1,2-diacyl-sn-glycerol + H(+). It catalyses the reaction a 1,2-diacyl-sn-glycero-3-phospho-(1D-myo-inositol) + H2O = 1D-myo-inositol 1-phosphate + a 1,2-diacyl-sn-glycerol + H(+). Its activity is regulated as follows. Activated by G(q)/G(11) G alpha proteins in response to ligand-binding to G protein-coupled receptors. Functionally, catalyzes the production of the second messenger molecules diacylglycerol (DAG) and inositol 1,4,5-trisphosphate (IP3). Key transducer of G protein-coupled receptor signaling: activated by G(q)/G(11) G alpha proteins downstream of G protein-coupled receptors activation. In neutrophils, participates in a phospholipase C-activating N-formyl peptide-activated GPCR (G protein-coupled receptor) signaling pathway by promoting RASGRP4 activation by DAG, to promote neutrophil functional responses. This chain is 1-phosphatidylinositol 4,5-bisphosphate phosphodiesterase beta-3, found in Homo sapiens (Human).